The sequence spans 383 residues: S-adenosylmethionine synthase (383 aa).

H22 lines the ATP pocket. D24 contacts Mg(2+). Position 50 (E50) interacts with K(+). L-methionine contacts are provided by E63 and Q99. The tract at residues Q99–S109 is flexible loop. Residues D160–K162, D235, R241–K242, S258, and K262 contribute to the ATP site. Residue D235 coordinates L-methionine. K266 is an L-methionine binding site.

This sequence belongs to the AdoMet synthase family. In terms of assembly, homotetramer; dimer of dimers. Requires Mg(2+) as cofactor. It depends on K(+) as a cofactor.

It localises to the cytoplasm. The enzyme catalyses L-methionine + ATP + H2O = S-adenosyl-L-methionine + phosphate + diphosphate. Its pathway is amino-acid biosynthesis; S-adenosyl-L-methionine biosynthesis; S-adenosyl-L-methionine from L-methionine: step 1/1. Functionally, catalyzes the formation of S-adenosylmethionine (AdoMet) from methionine and ATP. The overall synthetic reaction is composed of two sequential steps, AdoMet formation and the subsequent tripolyphosphate hydrolysis which occurs prior to release of AdoMet from the enzyme. This chain is S-adenosylmethionine synthase, found in Mycoplasma pneumoniae (strain ATCC 29342 / M129 / Subtype 1) (Mycoplasmoides pneumoniae).